The sequence spans 264 residues: 1-(5-phosphoribosyl)-5-[(5-phosphoribosylamino)methylideneamino] imidazole-4-carboxamide isomerase (264 aa).

It belongs to the HisA/HisF family.

It is found in the cytoplasm. The catalysed reaction is 1-(5-phospho-beta-D-ribosyl)-5-[(5-phospho-beta-D-ribosylamino)methylideneamino]imidazole-4-carboxamide = 5-[(5-phospho-1-deoxy-D-ribulos-1-ylimino)methylamino]-1-(5-phospho-beta-D-ribosyl)imidazole-4-carboxamide. It participates in amino-acid biosynthesis; L-histidine biosynthesis; L-histidine from 5-phospho-alpha-D-ribose 1-diphosphate: step 4/9. The chain is 1-(5-phosphoribosyl)-5-[(5-phosphoribosylamino)methylideneamino] imidazole-4-carboxamide isomerase (HIS6) from Yarrowia lipolytica (strain CLIB 122 / E 150) (Yeast).